Reading from the N-terminus, the 141-residue chain is Transcription antitermination protein NusB (141 aa).

It belongs to the NusB family.

In terms of biological role, involved in transcription antitermination. Required for transcription of ribosomal RNA (rRNA) genes. Binds specifically to the boxA antiterminator sequence of the ribosomal RNA (rrn) operons. The chain is Transcription antitermination protein NusB from Clostridium botulinum (strain Loch Maree / Type A3).